The following is a 301-amino-acid chain: Enolase-phosphatase E1 (301 aa).

Residues D22 and E24 each coordinate Mg(2+). Substrate contacts are provided by residues 163–164 (SS) and K197. D222 is a Mg(2+) binding site. A disordered region spans residues 273–301 (AQAGDTEAKRSASGDGALAAKKAPPTHDF).

Belongs to the HAD-like hydrolase superfamily. MasA/MtnC family. In terms of assembly, monomer. The cofactor is Mg(2+).

The protein resides in the cytoplasm. It localises to the nucleus. It catalyses the reaction 5-methylsulfanyl-2,3-dioxopentyl phosphate + H2O = 1,2-dihydroxy-5-(methylsulfanyl)pent-1-en-3-one + phosphate. The protein operates within amino-acid biosynthesis; L-methionine biosynthesis via salvage pathway; L-methionine from S-methyl-5-thio-alpha-D-ribose 1-phosphate: step 3/6. It functions in the pathway amino-acid biosynthesis; L-methionine biosynthesis via salvage pathway; L-methionine from S-methyl-5-thio-alpha-D-ribose 1-phosphate: step 4/6. Functionally, bifunctional enzyme that catalyzes the enolization of 2,3-diketo-5-methylthiopentyl-1-phosphate (DK-MTP-1-P) into the intermediate 2-hydroxy-3-keto-5-methylthiopentenyl-1-phosphate (HK-MTPenyl-1-P), which is then dephosphorylated to form the acireductone 1,2-dihydroxy-3-keto-5-methylthiopentene (DHK-MTPene). The protein is Enolase-phosphatase E1 of Monosiga brevicollis (Choanoflagellate).